A 183-amino-acid polypeptide reads, in one-letter code: TATA-box-binding protein (183 aa).

Tandem repeats lie at residues 8–84 and 99–175.

It belongs to the TBP family.

In terms of biological role, general factor that plays a role in the activation of archaeal genes transcribed by RNA polymerase. Binds specifically to the TATA box promoter element which lies close to the position of transcription initiation. The protein is TATA-box-binding protein of Methanosphaera stadtmanae (strain ATCC 43021 / DSM 3091 / JCM 11832 / MCB-3).